We begin with the raw amino-acid sequence, 31 residues long: Gamma-conotoxin-like As7a (31 aa).

3 cysteine pairs are disulfide-bonded: Cys-2–Cys-16, Cys-9–Cys-20, and Cys-15–Cys-31. A 4-carboxyglutamate modification is found at Glu-14.

It belongs to the conotoxin O1 superfamily. In terms of tissue distribution, expressed by the venom duct.

The protein localises to the secreted. Gamma-conotoxins may act on voltage-gated non-specific cation pacemaker channels (HCN). Elicits toxic effects in the freshwater snail Pomacea paludosa after intramuscular injection, but it has no effect when injected intracerebrally into mice. The protein is Gamma-conotoxin-like As7a of Conus cancellatus (Cancellate cone).